The sequence spans 142 residues: Large ribosomal subunit protein uL13 (142 aa).

It belongs to the universal ribosomal protein uL13 family. As to quaternary structure, part of the 50S ribosomal subunit.

Functionally, this protein is one of the early assembly proteins of the 50S ribosomal subunit, although it is not seen to bind rRNA by itself. It is important during the early stages of 50S assembly. The chain is Large ribosomal subunit protein uL13 from Idiomarina loihiensis (strain ATCC BAA-735 / DSM 15497 / L2-TR).